The chain runs to 110 residues: Ribonuclease P protein component 4 (110 aa).

Zn(2+) contacts are provided by Cys65, Cys68, Cys94, and Cys97.

The protein belongs to the eukaryotic/archaeal RNase P protein component 4 family. In terms of assembly, consists of a catalytic RNA component and at least 4-5 protein subunits. It depends on Zn(2+) as a cofactor.

It localises to the cytoplasm. It carries out the reaction Endonucleolytic cleavage of RNA, removing 5'-extranucleotides from tRNA precursor.. In terms of biological role, part of ribonuclease P, a protein complex that generates mature tRNA molecules by cleaving their 5'-ends. The chain is Ribonuclease P protein component 4 from Methanococcus maripaludis (strain C6 / ATCC BAA-1332).